Here is an 838-residue protein sequence, read N- to C-terminus: V-type proton ATPase 116 kDa subunit a 1 (838 aa).

At 1-388 (MGELFRSEEM…DAYGIGTYRE (388 aa)) the chain is on the cytoplasmic side. A phosphothreonine mark is found at threonine 250 and threonine 360. Tyrosine 364 bears the Phosphotyrosine mark. Residues 389–407 (INPAPYTVITFPFLFAVMF) form a helical membrane-spanning segment. Residues 408–409 (GD) lie on the Vacuolar side of the membrane. The chain crosses the membrane as a helical span at residues 410–426 (FGHGILMTLFAVWMVLR). The Cytoplasmic portion of the chain corresponds to 427 to 441 (ESRILSQKNENEMFS). A helical transmembrane segment spans residues 442-471 (MVFSGRYIILLMGLFSIYTGLIYNDCFSKS). At 472-535 (LNIFGSSWSV…ATNKLTFLNS (64 aa)) the chain is on the vacuolar side. A helical membrane pass occupies residues 536–555 (FKMKMSVILGIIHMLFGVSL). At 556-573 (SLFNHIYFKKPLNIYFGF) the chain is on the cytoplasmic side. Residues 574–594 (IPEIIFMSSLFGYLVILIFYK) form a helical membrane-spanning segment. Residues 595 to 639 (WTAYDAHSSRNAPSLLIHFINMFLFSYPESGNAMLYSGQKGIQCF) lie on the Vacuolar side of the membrane. A helical transmembrane segment spans residues 640–659 (LIVVAMLCVPWMLLFKPLIL). At 660-725 (RHQYLRKKHL…DTMVHQAIHT (66 aa)) the chain is on the cytoplasmic side. Residues 726-750 (IEYCLGCISNTASYLRLWALSLAHA) traverse the membrane as a helical segment. At 751–771 (QLSEVLWTMVIHIGLHVRSLA) the chain is on the vacuolar side. Residues 772 to 810 (GGLGLFFIFAAFATLTVAILLIMEGLSAFLHALRLHWVE) traverse the membrane as a helical segment. The Cytoplasmic segment spans residues 811–838 (FQNKFYTGTGFKFLPFSFEHIREGKFDE).

Belongs to the V-ATPase 116 kDa subunit family. V-ATPase is a heteromultimeric enzyme made up of two complexes: the ATP-hydrolytic V1 complex and the proton translocation V0 complex. The V1 complex consists of three catalytic AB heterodimers that form a heterohexamer, three peripheral stalks each consisting of EG heterodimers, one central rotor including subunits D and F, and the regulatory subunits C and H. The proton translocation complex V0 consists of the proton transport subunit a, a ring of proteolipid subunits c9c'', rotary subunit d, subunits e and f, and the accessory subunits ATP6AP1/Ac45 and ATP6AP2/PRR. Interacts with SPAAR. Expressed in brain (at protein level). As to expression, expressed in heart, kidney, liver, spleen, and to a lesser extent in brain.

The protein resides in the cytoplasmic vesicle. It localises to the clathrin-coated vesicle membrane. Its subcellular location is the secretory vesicle. It is found in the synaptic vesicle membrane. The protein localises to the melanosome. In terms of biological role, subunit of the V0 complex of vacuolar(H+)-ATPase (V-ATPase), a multisubunit enzyme composed of a peripheral complex (V1) that hydrolyzes ATP and a membrane integral complex (V0) that translocates protons. V-ATPase is responsible for the acidification of various organelles, such as lysosomes, endosomes, the trans-Golgi network, and secretory granules, including synaptic vesicles. In certain cell types, can be exported to the plasma membrane, where it is involved in the acidification of the extracellular environment. Required for assembly and activity of the vacuolar ATPase. Through its action on compartment acidification, plays an essential role in neuronal development in terms of integrity and connectivity of neurons. This Rattus norvegicus (Rat) protein is V-type proton ATPase 116 kDa subunit a 1 (Atp6v0a1).